We begin with the raw amino-acid sequence, 84 residues long: UPF0473 protein CLI_2624 (84 aa).

The protein belongs to the UPF0473 family.

The protein is UPF0473 protein CLI_2624 of Clostridium botulinum (strain Langeland / NCTC 10281 / Type F).